Consider the following 229-residue polypeptide: Potassium/proton antiporter CemA (229 aa).

A run of 2 helical transmembrane segments spans residues 7–27 and 107–127; these read FTPL…SFSV and ILHF…SILG.

Belongs to the CemA family.

Its subcellular location is the plastid. The protein resides in the chloroplast inner membrane. It carries out the reaction K(+)(in) + H(+)(out) = K(+)(out) + H(+)(in). In terms of biological role, contributes to K(+)/H(+) antiport activity by supporting proton efflux to control proton extrusion and homeostasis in chloroplasts in a light-dependent manner to modulate photosynthesis. Prevents excessive induction of non-photochemical quenching (NPQ) under continuous-light conditions. Indirectly promotes efficient inorganic carbon uptake into chloroplasts. The protein is Potassium/proton antiporter CemA of Solanum tuberosum (Potato).